A 345-amino-acid chain; its full sequence is S-adenosylmethionine:tRNA ribosyltransferase-isomerase (345 aa).

The protein belongs to the QueA family. As to quaternary structure, monomer.

The protein resides in the cytoplasm. It carries out the reaction 7-aminomethyl-7-carbaguanosine(34) in tRNA + S-adenosyl-L-methionine = epoxyqueuosine(34) in tRNA + adenine + L-methionine + 2 H(+). The protein operates within tRNA modification; tRNA-queuosine biosynthesis. Transfers and isomerizes the ribose moiety from AdoMet to the 7-aminomethyl group of 7-deazaguanine (preQ1-tRNA) to give epoxyqueuosine (oQ-tRNA). This is S-adenosylmethionine:tRNA ribosyltransferase-isomerase from Thermus thermophilus (strain ATCC BAA-163 / DSM 7039 / HB27).